A 196-amino-acid chain; its full sequence is RNA pyrophosphohydrolase (196 aa).

Residues 6-149 form the Nudix hydrolase domain; it reads GYRPNVGIVI…KRDVYRKVMK (144 aa). The short motif at 38–59 is the Nudix box element; it reads GGINDNESAEQAMYRELHEEVG. The segment at 166–196 is disordered; the sequence is SREANSQSNSANKKYSQTKYTKRHFYKSKGQ. The segment covering 167-184 has biased composition (polar residues); it reads REANSQSNSANKKYSQTK. Residues 185–196 show a composition bias toward basic residues; that stretch reads YTKRHFYKSKGQ.

This sequence belongs to the Nudix hydrolase family. RppH subfamily. A divalent metal cation is required as a cofactor.

In terms of biological role, accelerates the degradation of transcripts by removing pyrophosphate from the 5'-end of triphosphorylated RNA, leading to a more labile monophosphorylated state that can stimulate subsequent ribonuclease cleavage. The chain is RNA pyrophosphohydrolase from Haemophilus influenzae (strain 86-028NP).